A 174-amino-acid polypeptide reads, in one-letter code: Adenine phosphoribosyltransferase (174 aa).

This sequence belongs to the purine/pyrimidine phosphoribosyltransferase family. Homodimer.

It is found in the cytoplasm. It catalyses the reaction AMP + diphosphate = 5-phospho-alpha-D-ribose 1-diphosphate + adenine. It participates in purine metabolism; AMP biosynthesis via salvage pathway; AMP from adenine: step 1/1. Functionally, catalyzes a salvage reaction resulting in the formation of AMP, that is energically less costly than de novo synthesis. In Lachnoclostridium phytofermentans (strain ATCC 700394 / DSM 18823 / ISDg) (Clostridium phytofermentans), this protein is Adenine phosphoribosyltransferase.